We begin with the raw amino-acid sequence, 228 residues long: Growth arrest-specific protein 1 homolog (228 aa).

An N-terminal signal peptide occupies residues 1-17; that stretch reads MRRVILPLVMTVTLCLA. Residues Asn-143 and Asn-156 are each glycosylated (N-linked (GlcNAc...) asparagine). Asp-205 is lipidated: GPI-anchor amidated aspartate. Residues 206 to 228 constitute a propeptide, removed in mature form; that stretch reads SSVGHGFNILSAISVYLLTVLVF.

As to expression, pharynx muscle cells from its early formation, in the two-fold embryo, until the adult stage.

The protein localises to the cell membrane. Role in pharynx function or development. This is Growth arrest-specific protein 1 homolog (phg-1) from Caenorhabditis elegans.